A 1433-amino-acid polypeptide reads, in one-letter code: MRNYNSFESITIRLASPERIKEWSFGEVKKPETINYRTLKPERDGLFCEKIFGTTKDWECYCGKFKSIRYKGVVCDKCGVEVTHSKVRRERMGHIELAAPVSHIWYYRSVPSRMGLLLDMTINQLKSVLYFEKYVIIDPADSGRNRGELIDEDEYHNYLDEYGDKFIAGIGGDAIKELLARIDVDAEARVIRQKIQDKNKISDKRIFKRLEVLEAFRDSGNRPEWMVLDVVPVIPPELRPMVQLEGGRFATSDLNDLYRRVINRNNRLKRLLALKAPEIIVRNEKRMLQEAVGALFDNSRRKRTVKGKGNRPLKSISDMLKGKQGRFRQNLLGKRVDYSGRSVIVVGPELKYHQMGLPKKMALELFKPFIMKRLVDLELAPNIKSAKKKIEAEDKEVFDVLETVVKEHPVLLNRAPTLHRLGIQAFLPVLVEGKAIKLHPLVCHAFNADFDGDQMAIHVPLAPKAQLETWMLMLSPHNILNPANGQPICGPTQDIVLGIYYLTSEVKDAKGEGKFFTGLEEVMYAIETKTVEIRSKISVLHEGKIIETTPGRLIFNQVMPKGYVYINRTLGDKETNKIIADVYEKFGPGITVVMLDEIKRLGYRYATVFAPTISIDDIRVSPQKEGLVNDANKEVEKADMEYRKGIITNEERRKKVIEIWTKTNDRITEGMFKELEKDQAGFNPVYVMAASGARGSKQQIRQLAGMRGLMAKPSGEIIELAIRSNFREGLGVLEFFISTHGARKGLADTALKTADAGYLTRRLVDISQDVIVSEDDCGTKANITLGIVKEGENVIVSLADRVFGRYTAEDLVDPVTEKVVFPKDTLITRALGQQIENLGYDKIKVRSPLTCRSRHGICTKCYGMDMARLVPAEIGEAVGTIAAQSIGQPGTQLTMRTFHVGGAASATIQEKEHKVPFRSLVKSINGRLVTNANGSKVFARRGTIIVNRLIQEFNTESLSSVRIVDGQRLEKGEVFASQVGESIEQRITSDQAGTVSLIGTTLRILGDDIVIPVKIGTILKSEEGQIVEENKALAEFDPYNEVAVSETAGTIVWEDLEIGKNVRRDVDPKTSNIILKVVEQKKDRLVPKVIVGSDGYSVPVDALLQFQNGDKVREGDVIFKIPSVAEKTRDITGGLPRVDELFEARRPKDACTLAEIDGKIEDKGEIVKEKRILYILPDSPEQEKVKVAIPIGKQIRVRQGDFVKRGDQLDEGNFDPHDILAIKGPSALHEYLVSEVQEVYRLQGVHINDKHIEVVVRSMLRKVIITDSGDTSFVNQQQVDKFLFDEENDRVEQEGGSPAQGTPVLLGLTKASLNTESYFSAASFQETTKVLTDAAIKGKTDNLMGLKENVIIGHMIPAGTGMKKYRDIEVFKEMPGDLDWDLDSEEEEEELSELSEAAPVSTATLSKLVAEEDEDEDELEEEADDSDDEDDDD.

Residues Cys-60, Cys-62, Cys-75, and Cys-78 each contribute to the Zn(2+) site. Residues Asp-449, Asp-451, and Asp-453 each coordinate Mg(2+). Zn(2+)-binding residues include Cys-777, Cys-851, Cys-858, and Cys-861. 2 stretches are compositionally biased toward acidic residues: residues 1383-1393 (DSEEEEEELSE) and 1411-1433 (EEDE…DDDD). The interval 1383-1433 (DSEEEEEELSELSEAAPVSTATLSKLVAEEDEDEDELEEEADDSDDEDDDD) is disordered.

This sequence belongs to the RNA polymerase beta' chain family. In terms of assembly, the RNAP catalytic core consists of 2 alpha, 1 beta, 1 beta' and 1 omega subunit. When a sigma factor is associated with the core the holoenzyme is formed, which can initiate transcription. Requires Mg(2+) as cofactor. The cofactor is Zn(2+).

It carries out the reaction RNA(n) + a ribonucleoside 5'-triphosphate = RNA(n+1) + diphosphate. DNA-dependent RNA polymerase catalyzes the transcription of DNA into RNA using the four ribonucleoside triphosphates as substrates. This Leptospira biflexa serovar Patoc (strain Patoc 1 / Ames) protein is DNA-directed RNA polymerase subunit beta'.